We begin with the raw amino-acid sequence, 185 residues long: Superoxide dismutase [Cu-Zn] (185 aa).

The signal sequence occupies residues 1–18 (MTAFYKLCGMSMLSLVLA). Residues His85, His87, and His102 each contribute to the Cu cation site. Cys92 and Cys180 are disulfide-bonded. Residues His102, His111, His120, and Asp123 each contribute to the Zn(2+) site. His158 is a binding site for Cu cation.

Belongs to the Cu-Zn superoxide dismutase family. As to quaternary structure, homodimer. Requires Cu cation as cofactor. Zn(2+) serves as cofactor.

It is found in the periplasm. The enzyme catalyses 2 superoxide + 2 H(+) = H2O2 + O2. Destroys radicals which are normally produced within the cells and which are toxic to biological systems. The chain is Superoxide dismutase [Cu-Zn] (sodC) from Francisella tularensis subsp. holarctica (strain LVS).